The following is a 490-amino-acid chain: Acetyl-coenzyme A carboxylase carboxyl transferase subunit beta, chloroplastic (490 aa).

The interval leucine 184 to leucine 203 is disordered. One can recognise a CoA carboxyltransferase N-terminal domain in the interval leucine 221 to lysine 490. Zn(2+) is bound by residues cysteine 225, cysteine 228, cysteine 244, and cysteine 247. A C4-type zinc finger spans residues cysteine 225–cysteine 247.

It belongs to the AccD/PCCB family. In terms of assembly, acetyl-CoA carboxylase is a heterohexamer composed of biotin carboxyl carrier protein, biotin carboxylase and 2 subunits each of ACCase subunit alpha and ACCase plastid-coded subunit beta (accD). It depends on Zn(2+) as a cofactor. As to expression, RNA expressed in leaf, root, stem, and tuber; the least expression occurs in stems. RNA persists even in senescent leaves.

The protein localises to the plastid. The protein resides in the chloroplast stroma. The catalysed reaction is N(6)-carboxybiotinyl-L-lysyl-[protein] + acetyl-CoA = N(6)-biotinyl-L-lysyl-[protein] + malonyl-CoA. Its pathway is lipid metabolism; malonyl-CoA biosynthesis; malonyl-CoA from acetyl-CoA: step 1/1. Its function is as follows. Component of the acetyl coenzyme A carboxylase (ACC) complex. Biotin carboxylase (BC) catalyzes the carboxylation of biotin on its carrier protein (BCCP) and then the CO(2) group is transferred by the transcarboxylase to acetyl-CoA to form malonyl-CoA. The chain is Acetyl-coenzyme A carboxylase carboxyl transferase subunit beta, chloroplastic from Solanum tuberosum (Potato).